The primary structure comprises 166 residues: MAIKLEDKKAIVAEVNEAAKAALSAVVADARGVTVGAMTGLRKEAREAGVYVRVVRNTLLKRAVEGTQYDVLNDAFVGPTLIAFSKEHPGAAARIFKEFAKGQEKFEIKAAAFEGKYLAANEIDVLASLPTRDEAIAKLMSVIQGATSKLARTLAAIRDQKEAAAA.

It belongs to the universal ribosomal protein uL10 family. Part of the ribosomal stalk of the 50S ribosomal subunit. The N-terminus interacts with L11 and the large rRNA to form the base of the stalk. The C-terminus forms an elongated spine to which L12 dimers bind in a sequential fashion forming a multimeric L10(L12)X complex.

Forms part of the ribosomal stalk, playing a central role in the interaction of the ribosome with GTP-bound translation factors. This is Large ribosomal subunit protein uL10 from Pseudomonas fluorescens (strain ATCC BAA-477 / NRRL B-23932 / Pf-5).